The chain runs to 1701 residues: MGNSDSQYTLQGSKNHSNTITGAKQIPCSLKIRGIHAKEEKSLHGWGHGSNGAGYKSRSLARSCLSHFKSNQPYASRLGGPTCKVSRGVAYSTHRTNAPGKDFQGISAAFSTENGFHSVGHELADNHITSRDCNGHLLNCYGRNESIASTPPGEDRKSPRVLIKTLGKLDGCLRVEFHNGGNPSKVPAEDCSEPVQLLRYSPTLASETSPVPEARRGSSADSLPSHRPSPTDSRLRSSKGSSLSSESSWYDSPWGNAGELSEAEGSFLAPGMPDPSLHASFPPGDAKKPFNQSSSLSSLRELYKDANLGSLSPSGIRLSDEYMGTHASLSNRVSFASDIDVPSRVAHGDPIQYSSFTLPCRKPKAFVEDTAKKDSLKARMRRISDWTGSLSRKKRKLQEPRSKEGSDYFDSRSDGLNTDVQGSSQASAFLWSGGSTQILSQRSESTHAIGSDPLRQNIYENFMRELEMSRTNTENIETSTETAESSSESLSSLEQLDLLFEKEQGVVRKAGWLFFKPLVTVQKERKLELVARRKWKQYWVTLKGCTLLFYETYGKNSMDQSSAPRCALFAEDSIVQSVPEHPKKENVFCLSNSFGDVYLFQATSQTDLENWVTAVHSACASLFAKKHGKEDTLRLLKNQTKNLLQKIDMDSKMKKMAELQLSVVSDPKNRKAIENQIQQWEQNLEKFHMDLFRMRCYLASLQGGELPNPKSLLAAASRPSKLALGRLGILSVSSFHALVCSRDDSALRKRTLSLTQRGRNKKGIFSSLKGLDTLARKGKEKRPSITQVDELLHIYGSTVDGVPRDNAWEIQTYVHFQDNHGVTVGIKPEHRVEDILTLACKMRQLEPSHYGLQLRKLVDDNVEYCIPAPYEYMQQQVYDEIEVFPLNVYDVQLTKTGSVCDFGFAVTAQVDERQHLSRIFISDVLPDGLAYGEGLRKGNEIMTLNGEAVSDLDLKQMEALFSEKSVGLTLIARPPDTKATLCTSWSDSDLFSRDQKSLLPPPNQSQLLEEFLDNFKKNTANDFSNVPDITTGLKRSQTDGTLDQVSHREKMEQTFRSAEQITALCRSFNDSQANGMEGPRENQDPPPRSLARHLSDADRLRKVIQELVDTEKSYVKDLSCLFELYLEPLQNETFLTQDEMESLFGSLPEMLEFQKVFLETLEDGISASSDFNTLETPSQFRKLLFSLGGSFLYYADHFKLYSGFCANHIKVQKVLERAKTDKAFKAFLDARNPTKQHSSTLESYLIKPVQRVLKYPLLLKELVSLTDQESEEHYHLTEALKAMEKVASHINEMQKIYEDYGTVFDQLVAEQSGTEKEVTELSMGELLMHSTVSWLNPFLSLGKARKDLELTVFVFKRAVILVYKENCKLKKKLPSNSRPAHNSTDLDPFKFRWLIPISALQVRLGNPAGTENNSIWELIHTKSEIEGRPETIFQLCCSDSESKTNIVKVIRSILRENFRRHIKCELPLEKTCKDRLVPLKNRVPVSAKLASSRSLKVLKNSSSNEWTGETGKGTLLDSDEGSLSSGTQSSGCPTAEGRQDSKSTSPGKYPHPGLADFADNLIKESDILSDEDDDHRQTVKQGSPTKDIEIQFQRLRISEDPDVHPEAEQQPGPESGEGQKGGEQPKLVRGHFCPIKRKANSTKRDRGTLLKAQIRHQSLDSQSENATIDLNSVLEREFSVQSLTSVVSEECFYETESHGKS.

Disordered stretches follow at residues 1 to 21 (MGNS…NTIT), 201 to 250 (SPTL…SSWY), 265 to 293 (GSFL…FNQS), and 389 to 417 (SLSR…DGLN). Gly2 carries the N-myristoyl glycine lipid modification. The span at 238-248 (SKGSSLSSESS) shows a compositional bias: low complexity. Residues 397–413 (LQEPRSKEGSDYFDSRS) are compositionally biased toward basic and acidic residues. The region spanning 506–620 (VVRKAGWLFF…WVTAVHSACA (115 aa)) is the PH 1 domain. A coiled-coil region spans residues 628 to 695 (GKEDTLRLLK…KFHMDLFRMR (68 aa)). One can recognise an RBD domain in the interval 810-881 (IQTYVHFQDN…YMQQQVYDEI (72 aa)). Residues 890–976 (DVQLTKTGSV…GLTLIARPPD (87 aa)) form the PDZ domain. Residues 1070 to 1092 (DSQANGMEGPRENQDPPPRSLAR) form a disordered region. One can recognise a DH domain in the interval 1099–1293 (RLRKVIQELV…EKVASHINEM (195 aa)). The region spanning 1347 to 1478 (DLELTVFVFK…EKTCKDRLVP (132 aa)) is the PH 2 domain. Disordered stretches follow at residues 1500-1556 (NSSS…GLAD) and 1568-1628 (LSDE…PKLV). Residues 1513 to 1527 (GTLLDSDEGSLSSGT) show a composition bias toward low complexity. A Phosphoserine modification is found at Ser1583. The span at 1596 to 1607 (RISEDPDVHPEA) shows a compositional bias: basic and acidic residues. Thr1648 carries the phosphothreonine modification.

It belongs to the TIAM family. As to quaternary structure, interacts with MAP1A, MAP1B, PARP1 and YWHAE. Interacts with CD44, PARD3 and MAPK8IP2. Post-translationally, phosphorylated on serine and threonine residues. Phosphorylated on Thr-1648 by Rho-kinase. Its phosphorylation by Rho-kinase inhibits its guanine nucleotide exchange activity, its interaction with MAP1A, MAP1B, PARP1 and YWHAE and reduces its ability to promote neurite growth. As to expression, expressed in the occipital, frontal and temporal lobes, cerebellum, putamen and testis.

It localises to the cytoplasm. It is found in the cell projection. Its subcellular location is the lamellipodium. The protein resides in the filopodium. The protein localises to the growth cone. It localises to the neuron projection. It is found in the perikaryon. In terms of biological role, modulates the activity of RHO-like proteins and connects extracellular signals to cytoskeletal activities. Acts as a GDP-dissociation stimulator protein that stimulates the GDP-GTP exchange activity of RHO-like GTPases and activates them. Mediates extracellular laminin signals to activate Rac1, contributing to neurite growth. Involved in lamellipodial formation and advancement of the growth cone of embryonic hippocampal neurons. Promotes migration of neurons in the cerebral cortex. When overexpressed, induces membrane ruffling accompanied by the accumulation of actin filaments along the altered plasma membrane. Activates specifically RAC1, but not CDC42 and RHOA. This is Rho guanine nucleotide exchange factor TIAM2 (TIAM2) from Homo sapiens (Human).